The primary structure comprises 387 residues: N6-succino-2-amino-2'-deoxyadenylate synthase (387 aa).

The active-site Proton acceptor is the Ser14. The ATP site is built by Ser14, Thr15, Gly16, Lys17, and Gly18. Ser14 provides a ligand contact to dGMP. Ser14 is a binding site for Mg(2+). Asn40 is a binding site for dGMP. Gly42, His43, and Thr44 together coordinate ATP. Gly42 is a binding site for Mg(2+). The dGMP site is built by Ser125, Thr126, and Arg140. Gln207 contacts ATP. Position 222 (Thr222) interacts with dGMP. Thr293 serves as a coordination point for Mg(2+). L-aspartate-binding residues include Thr293, Val294, and Arg299. The ATP site is built by Asn324 and Asn327.

It belongs to the Caudovirales PurZ family. Mg(2+) serves as cofactor.

It catalyses the reaction dGMP + L-aspartate + ATP = (2S)-2-amino-2'-deoxyadenylo-succinate + ADP + phosphate + 2 H(+). The protein operates within purine metabolism. Functionally, involved in the synthesis of the atypical nucleotide dZTP (2-amino-2'-deoxyadenosine-5'-triphosphate). Catalyzes the condensation of aspartate with deoxyguanylate into dSMP (N6-succino-2-amino-2'-deoxyadenylate), which undergoes defumarylation and phosphorylation respectively by host PurB and guanylate/nucleoside diphosphate kinases to give dZTP. dZTP is integrated into the viral genome instead of adenine by the viral DNA polymerase. This Z-base probably completely replaces adenosine and forms a triple bond to the opposite T-base. The resulting non-standard viral DNA is called Z-genome. The chemically modified DNA is probably harder for the host bacteria to digest with nucleases or restriction enzymes. This is N6-succino-2-amino-2'-deoxyadenylate synthase from Acinetobacter phage SH-Ab 15497.